The sequence spans 430 residues: GTPase Obg (430 aa).

An Obg domain is found at 1–158 (MFVDQVKISL…LEVTLELKLL (158 aa)). The tract at residues 118-145 (RGGRGGRGNSRFATPRNPAPDFSENGEP) is disordered. Residues 159–329 (ADVGLVGFPS…LLYQIADKLE (171 aa)) form the OBG-type G domain. Residues 165–172 (GFPSVGKS), 190–194 (FTTIK), 212–215 (DLPG), 282–285 (NKMD), and 310–312 (STI) contribute to the GTP site. Mg(2+) contacts are provided by S172 and T192. An OCT domain is found at 352-430 (KHTPSADKFT…ILGGEFEFVE (79 aa)).

The protein belongs to the TRAFAC class OBG-HflX-like GTPase superfamily. OBG GTPase family. As to quaternary structure, monomer. Mg(2+) is required as a cofactor.

Its subcellular location is the cytoplasm. Functionally, an essential GTPase which binds GTP, GDP and possibly (p)ppGpp with moderate affinity, with high nucleotide exchange rates and a fairly low GTP hydrolysis rate. Plays a role in control of the cell cycle, stress response, ribosome biogenesis and in those bacteria that undergo differentiation, in morphogenesis control. This chain is GTPase Obg, found in Staphylococcus epidermidis (strain ATCC 35984 / DSM 28319 / BCRC 17069 / CCUG 31568 / BM 3577 / RP62A).